A 414-amino-acid chain; its full sequence is STAGA complex 65 subunit gamma (414 aa).

A disordered region spans residues 87 to 108 (NQQQTEGVKTEESEPLPSCPGS). At Ser-108 the chain carries Phosphoserine. Lys-271 is covalently cross-linked (Glycyl lysine isopeptide (Lys-Gly) (interchain with G-Cter in SUMO2)). A phosphoserine mark is found at Ser-323 and Ser-334. The interval 346 to 414 (PQESEEGNVS…QRCKKRMRKI (69 aa)) is disordered. The segment covering 386 to 395 (SSYGSHSTDS) has biased composition (low complexity).

Component of the STAGA transcription coactivator-HAT complex, at least composed of SUPT3H, SUPT7L, GCN5L2, TAF5L, TAF6L, TADA3L, TAD1L, TAF10, TAF12 and TAF9. Post-translationally, sumoylated. Expressed at high levels in adenocarcinomas and gliomas and low in esophageal cancers and malignant hematological disease. Also expressed at high level in the thymus, low in peripheral blood mononuclear cells, and lowest in the stomach, small intestine, and skeletal muscle.

The protein resides in the nucleus. This is STAGA complex 65 subunit gamma (SUPT7L) from Homo sapiens (Human).